The sequence spans 143 residues: Myosin 1 light chain cam2 (143 aa).

3 consecutive EF-hand domains span residues 6 to 41 (EQTD…LGIN), 75 to 110 (ESEE…LGEK), and 111 to 143 (LSDN…IMAK).

This sequence belongs to the calmodulin family. Interacts with myo1 and pik1.

The protein localises to the cytoplasm. The protein resides in the prospore membrane. Plays a role in meiosis and sporulation. The chain is Myosin 1 light chain cam2 from Schizosaccharomyces pombe (strain 972 / ATCC 24843) (Fission yeast).